The chain runs to 405 residues: Potassium channel subfamily K member 13 (405 aa).

Topologically, residues 1–19 (MAGRGCGCSPGHLNEDNAR) are cytoplasmic. A helical membrane pass occupies residues 20–40 (FLLLAGLILLYLLGGAAVFSA). N-linked (GlcNAc...) asparagine glycans are attached at residues asparagine 59 and asparagine 65. Positions 95 to 115 (WDFTGAFYFVGTVVSTIGFGM) form an intramembrane region, pore-forming. 3 residues coordinate K(+): threonine 110, isoleucine 111, and glycine 112. Residues 110 to 115 (TIGFGM) form a selectivity filter 1 region. The helical transmembrane segment at 125–145 (IFLIFYGLIGCASTILFFNLF) threads the bilayer. The Cytoplasmic segment spans residues 146–193 (LERLITVIACVMRSCHQQQLRRRGAVTQDNMKAPEKGEADSLTGWKPS). The chain crosses the membrane as a helical span at residues 194–214 (VYYVMLILCLASVAISCGASA). The segment at residues 224–244 (YFDSVYFCFVAFSTIGFGDLV) is an intramembrane region (pore-forming). K(+)-binding residues include threonine 237, isoleucine 238, glycine 239, and phenylalanine 240. The segment at 237 to 242 (TIGFGD) is selectivity filter 2. The helical transmembrane segment at 263-283 (FLILMGVCCIYSLFNVISILI) threads the bilayer. Residues 284–405 (KQTVNWILRK…NRLAETSGDR (122 aa)) are Cytoplasmic-facing.

Belongs to the two pore domain potassium channel (TC 1.A.1.8) family. As to quaternary structure, homodimer. Heterodimer with KCNK12.

The protein localises to the cell membrane. The catalysed reaction is K(+)(in) = K(+)(out). K(+) channel that conducts outward rectifying tonic currents potentiated by purinergic signals. Homo- and heterodimerizes to form functional channels with distinct regulatory and gating properties. Contributes most of K(+) currents at the plasma membrane of resting microglia. Maintains a depolarized membrane potential required for proper ramified microglia morphology and phagocytosis, selectively mediating microglial pruning of presynaptic compartments at hippocampal excitatory synapses. Upon local release of ATP caused by neuronal injury or infection, it is potentiated by P2RY12 and P2RX7 receptor signaling and contributes to ATP-triggered K(+) efflux underlying microglial NLRP3 inflammasome assembly and IL1B release. This Mus musculus (Mouse) protein is Potassium channel subfamily K member 13.